The sequence spans 242 residues: Protein odd-skipped-related 1 (242 aa).

C2H2-type zinc fingers lie at residues 128-150 (FICK…ERTH), 156-178 (FHCE…KYIH), and 184-207 (HKCE…SCHH).

This sequence belongs to the Odd C2H2-type zinc-finger protein family.

The protein resides in the nucleus. In terms of biological role, may function as transcription regulator. Essential for larval development. Required for morphogenesis and function of the digestive tract. This is Protein odd-skipped-related 1 from Caenorhabditis elegans.